We begin with the raw amino-acid sequence, 535 residues long: Glucose-6-phosphate isomerase (535 aa).

The Proton donor role is filled by Glu-359. Active-site residues include His-390 and Lys-505.

It belongs to the GPI family.

The protein localises to the cytoplasm. It carries out the reaction alpha-D-glucose 6-phosphate = beta-D-fructose 6-phosphate. The protein operates within carbohydrate biosynthesis; gluconeogenesis. Its pathway is carbohydrate degradation; glycolysis; D-glyceraldehyde 3-phosphate and glycerone phosphate from D-glucose: step 2/4. In terms of biological role, catalyzes the reversible isomerization of glucose-6-phosphate to fructose-6-phosphate. In Treponema pallidum (strain Nichols), this protein is Glucose-6-phosphate isomerase.